The primary structure comprises 296 residues: NAD kinase (296 aa).

D72 acts as the Proton acceptor in catalysis. Residues 72–73 (DG), 146–147 (ND), R157, K174, D176, 187–192 (TAYALS), and Q247 each bind NAD(+).

The protein belongs to the NAD kinase family. A divalent metal cation serves as cofactor.

It is found in the cytoplasm. It carries out the reaction NAD(+) + ATP = ADP + NADP(+) + H(+). In terms of biological role, involved in the regulation of the intracellular balance of NAD and NADP, and is a key enzyme in the biosynthesis of NADP. Catalyzes specifically the phosphorylation on 2'-hydroxyl of the adenosine moiety of NAD to yield NADP. The polypeptide is NAD kinase (Pseudomonas fluorescens (strain ATCC BAA-477 / NRRL B-23932 / Pf-5)).